The chain runs to 142 residues: 3-hydroxyacyl-[acyl-carrier-protein] dehydratase FabZ (142 aa).

Histidine 47 is a catalytic residue.

Belongs to the thioester dehydratase family. FabZ subfamily.

The protein resides in the cytoplasm. It catalyses the reaction a (3R)-hydroxyacyl-[ACP] = a (2E)-enoyl-[ACP] + H2O. Its function is as follows. Involved in unsaturated fatty acids biosynthesis. Catalyzes the dehydration of short chain beta-hydroxyacyl-ACPs and long chain saturated and unsaturated beta-hydroxyacyl-ACPs. This chain is 3-hydroxyacyl-[acyl-carrier-protein] dehydratase FabZ, found in Thermoanaerobacter pseudethanolicus (strain ATCC 33223 / 39E) (Clostridium thermohydrosulfuricum).